A 61-amino-acid chain; its full sequence is Small ribosomal subunit protein uS14 (61 aa).

Positions 24, 27, 40, and 43 each coordinate Zn(2+).

This sequence belongs to the universal ribosomal protein uS14 family. Zinc-binding uS14 subfamily. As to quaternary structure, part of the 30S ribosomal subunit. Contacts proteins S3 and S10. It depends on Zn(2+) as a cofactor.

Its function is as follows. Binds 16S rRNA, required for the assembly of 30S particles and may also be responsible for determining the conformation of the 16S rRNA at the A site. In Borrelia hermsii (strain HS1 / DAH), this protein is Small ribosomal subunit protein uS14.